A 259-amino-acid chain; its full sequence is BTB/POZ domain-containing protein KCTD4 (259 aa).

The segment at Met-1–Asp-25 is disordered. In terms of domain architecture, BTB spans Thr-33–Gln-134.

This Homo sapiens (Human) protein is BTB/POZ domain-containing protein KCTD4 (KCTD4).